We begin with the raw amino-acid sequence, 367 residues long: Chorismate synthase (367 aa).

R48 is a binding site for NADP(+). FMN is bound by residues 125 to 127, G283, 298 to 302, and R324; these read RSS and KPTPS.

Belongs to the chorismate synthase family. Homotetramer. FMNH2 serves as cofactor.

The enzyme catalyses 5-O-(1-carboxyvinyl)-3-phosphoshikimate = chorismate + phosphate. The protein operates within metabolic intermediate biosynthesis; chorismate biosynthesis; chorismate from D-erythrose 4-phosphate and phosphoenolpyruvate: step 7/7. In terms of biological role, catalyzes the anti-1,4-elimination of the C-3 phosphate and the C-6 proR hydrogen from 5-enolpyruvylshikimate-3-phosphate (EPSP) to yield chorismate, which is the branch point compound that serves as the starting substrate for the three terminal pathways of aromatic amino acid biosynthesis. This reaction introduces a second double bond into the aromatic ring system. The sequence is that of Chorismate synthase from Agathobacter rectalis (strain ATCC 33656 / DSM 3377 / JCM 17463 / KCTC 5835 / VPI 0990) (Eubacterium rectale).